Reading from the N-terminus, the 213-residue chain is Probable 26S proteasome regulatory subunit p27 (213 aa).

A coiled-coil region spans residues 1 to 82 (MDEFKQLDLK…IKKVLEKVFS (82 aa)). The 65-residue stretch at 120–184 (SKILGRVKPF…TLDVLLIRGY (65 aa)) folds into the PDZ domain.

Its subcellular location is the cytoplasm. It is found in the nucleus. Functionally, acts as a chaperone during the assembly of the 26S proteasome, specifically of the base subcomplex of the 19S regulatory complex (RC). This chain is Probable 26S proteasome regulatory subunit p27 (nas2), found in Schizosaccharomyces pombe (strain 972 / ATCC 24843) (Fission yeast).